Consider the following 137-residue polypeptide: LAVCVSLLGAANIPPQHLNLCQFKEMIRYTIPCEKTWLEYTHYGCYCGYGGSGTPVDALDRCCYVHDNCYGDAEKKHKCNPKTQSYSYKLTKRTIICYDAAGTCARIVCDCDRTAALCFGNSEYIGAHKNIDTARYC.

The N-terminal stretch at 1 to 10 (LAVCVSLLGA) is a signal peptide. A propeptide spanning residues 11-18 (ANIPPQHL) is cleaved from the precursor. Disulfide bonds link C45–C137, C47–C63, C62–C118, C69–C111, C79–C104, and C97–C109. Residues Y46, G48, and G50 each contribute to the Ca(2+) site. H66 is an active-site residue. Residue D67 participates in Ca(2+) binding. D112 is a catalytic residue.

It belongs to the phospholipase A2 family. Group I subfamily. D49 sub-subfamily. As to quaternary structure, heterodimer; disulfide-linked. The A chains have phospholipase A2 activity and the B chains show homology with the basic protease inhibitors. Requires Ca(2+) as cofactor. In terms of tissue distribution, expressed by the venom gland.

The protein resides in the secreted. The enzyme catalyses a 1,2-diacyl-sn-glycero-3-phosphocholine + H2O = a 1-acyl-sn-glycero-3-phosphocholine + a fatty acid + H(+). In terms of biological role, snake venom phospholipase A2 (PLA2) that inhibits neuromuscular transmission by blocking acetylcholine release from the nerve termini. PLA2 catalyzes the calcium-dependent hydrolysis of the 2-acyl groups in 3-sn-phosphoglycerides. This is Basic phospholipase A2 beta-bungarotoxin A-AL4 chain from Bungarus multicinctus (Many-banded krait).